Here is a 335-residue protein sequence, read N- to C-terminus: MAPEDHEGATSLLQSFERRFLAARALPSFPWQSLEEKLKDPSGSELLLAILQRTVKHPVCVQHGPSVKYARCFLSKLIKKHEAVPTEPLDALYEALAEVLMTQESTQCHRSYLLPSGNSVTLSESTAIVSHGTTGLVTWDAALYLAEWAIENPAAFTDRTILELGSGAGLTGLAICKACCPRAYIFSDCHAQVLEQLRGNVLLNGFSLEPHTPIDAGSSKVTVAQLDWDEVTASQLSAFQADVVIAADVLYCWEMTLSLVRVLKMLEDCQRKSAPDVYVAYTIRSQDTGKLFIEELDRAGIYWEEVPPHTGKLFPYEEHSAIVILKLVLTSRHGV.

Met-1 carries the post-translational modification N-acetylmethionine. Residues Trp-139, 165–167 (GSG), Trp-228, and Ala-247 each bind S-adenosyl-L-methionine.

This sequence belongs to the class I-like SAM-binding methyltransferase superfamily. EEF2KMT family. In terms of assembly, interacts with FAM86B2 and FAM86C1P.

It is found in the cytoplasm. It carries out the reaction L-lysyl-[protein] + 3 S-adenosyl-L-methionine = N(6),N(6),N(6)-trimethyl-L-lysyl-[protein] + 3 S-adenosyl-L-homocysteine + 3 H(+). In terms of biological role, catalyzes the trimethylation of eukaryotic elongation factor 2 (EEF2) on 'Lys-525'. The polypeptide is Protein-lysine N-methyltransferase EEF2KMT (Eef2kmt) (Mus musculus (Mouse)).